Reading from the N-terminus, the 317-residue chain is Tenomodulin (317 aa).

The Cytoplasmic segment spans residues 1 to 30; it reads MAKNPPENCEGCHILNAEALKSKKIRKSLK. The chain crosses the membrane as a helical; Signal-anchor for type II membrane protein span at residues 31–50; the sequence is ICGLVFGILALTLIVLFWGS. Over 51–317 the chain is Extracellular; the sequence is KHFWPEVSKK…WWVARMLGRV (267 aa). Residues 93 to 186 form the BRICHOS domain; the sequence is GNGTDETLEV…ICDNVTMYWI (94 aa). An N-linked (GlcNAc...) asparagine glycan is attached at Asn-94. Cys-120 and Cys-178 are disulfide-bonded. Residue Asn-180 is glycosylated (N-linked (GlcNAc...) asparagine). A Phosphoserine modification is found at Ser-239.

This sequence belongs to the chondromodulin-1 family. In terms of tissue distribution, highly expressed in tendons.

It is found in the membrane. The protein resides in the nucleus envelope. In terms of biological role, may be an angiogenesis inhibitor. The protein is Tenomodulin (Tnmd) of Rattus norvegicus (Rat).